Reading from the N-terminus, the 577-residue chain is Arginine--tRNA ligase (577 aa).

The 'HIGH' region signature appears at 122–132 (PNVAKEMHVGH).

The protein belongs to the class-I aminoacyl-tRNA synthetase family. In terms of assembly, monomer.

It localises to the cytoplasm. The catalysed reaction is tRNA(Arg) + L-arginine + ATP = L-arginyl-tRNA(Arg) + AMP + diphosphate. The chain is Arginine--tRNA ligase from Salmonella agona (strain SL483).